A 673-amino-acid polypeptide reads, in one-letter code: Annexin A6 (673 aa).

A2 bears the N-acetylalanine mark. A Phosphoserine modification is found at S13. Annexin repeat units lie at residues 20-91, 92-163, 175-247, 251-322, 363-434, 435-506, 521-595, and 599-670; these read FDAN…NLMR, PLAY…VLLQ, DLVQ…AVVK, STPE…KLCG, FNPD…GLMM, PPAH…SLAT, EDAQ…AIVQ, and NKPL…ALCG. At Y30 the chain carries Phosphotyrosine. An N6-acetyllysine mark is found at K63, K68, K75, and K81. A Phosphotyrosine modification is found at Y201. N6-acetyllysine is present on residues K306, K370, and K418. The residue at position 422 (S422) is a Phosphoserine. K483 is subject to N6-acetyllysine. Phosphoserine is present on S537. At K620 the chain carries N6-acetyllysine.

This sequence belongs to the annexin family.

It is found in the cytoplasm. The protein resides in the melanosome. Its function is as follows. May associate with CD21. May regulate the release of Ca(2+) from intracellular stores. In Rattus norvegicus (Rat), this protein is Annexin A6 (Anxa6).